The following is a 387-amino-acid chain: 3-ketoacyl-CoA thiolase (387 aa).

Residue Cys-91 is the Acyl-thioester intermediate of the active site. Active-site proton acceptor residues include His-343 and Cys-373.

The protein belongs to the thiolase-like superfamily. Thiolase family. Heterotetramer of two alpha chains (FadB) and two beta chains (FadA).

The protein resides in the cytoplasm. It carries out the reaction an acyl-CoA + acetyl-CoA = a 3-oxoacyl-CoA + CoA. Its pathway is lipid metabolism; fatty acid beta-oxidation. In terms of biological role, catalyzes the final step of fatty acid oxidation in which acetyl-CoA is released and the CoA ester of a fatty acid two carbons shorter is formed. This is 3-ketoacyl-CoA thiolase from Cronobacter sakazakii (strain ATCC BAA-894) (Enterobacter sakazakii).